The following is an 818-amino-acid chain: Beta-glucosidase (818 aa).

Aspartate 222 is an active-site residue. A PA14 domain is found at valine 386–glutamate 538.

The protein belongs to the glycosyl hydrolase 3 family.

It is found in the cytoplasm. It carries out the reaction Hydrolysis of terminal, non-reducing beta-D-glucosyl residues with release of beta-D-glucose.. Involved in modifying a vir-inducing plant signal molecule. Hydrolyzes coniferin but not cellobiose. The polypeptide is Beta-glucosidase (cbg-1) (Rhizobium radiobacter (Agrobacterium tumefaciens)).